The primary structure comprises 488 residues: 3-octaprenyl-4-hydroxybenzoate carboxy-lyase (488 aa).

Residue N172 participates in Mn(2+) binding. Residues 175–177 (IYR), 189–191 (RWL), and 194–195 (RG) each bind prenylated FMN. E238 is a Mn(2+) binding site. Catalysis depends on D287, which acts as the Proton donor.

It belongs to the UbiD family. As to quaternary structure, homohexamer. Prenylated FMN is required as a cofactor. It depends on Mn(2+) as a cofactor.

It localises to the cell membrane. It catalyses the reaction a 4-hydroxy-3-(all-trans-polyprenyl)benzoate + H(+) = a 2-(all-trans-polyprenyl)phenol + CO2. It participates in cofactor biosynthesis; ubiquinone biosynthesis. In terms of biological role, catalyzes the decarboxylation of 3-octaprenyl-4-hydroxy benzoate to 2-octaprenylphenol, an intermediate step in ubiquinone biosynthesis. The protein is 3-octaprenyl-4-hydroxybenzoate carboxy-lyase of Pseudomonas aeruginosa (strain LESB58).